The chain runs to 1026 residues: RecBCD enzyme subunit RecB (1026 aa).

A UvrD-like helicase ATP-binding domain is found at 1–438 (MSSFDIFSPT…LILDTNYRST (438 aa)). Positions 1–766 (MSSFDIFSPT…LANYANITQH (766 aa)) are DNA-binding and helicase activity, interacts with RecC. 21–28 (ASAGTGKT) contacts ATP. Residues 452–700 (PSPFLETPQT…KITTVHSSKG (249 aa)) form the UvrD-like helicase C-terminal domain. The segment at 815 to 1026 (SQPIYSFSST…KGNGFLQPSP (212 aa)) is nuclease activity, interacts with RecD and RecA. Residues histidine 854, aspartate 940, and aspartate 953 each contribute to the Mg(2+) site. Residue aspartate 953 is the For nuclease activity of the active site.

The protein belongs to the helicase family. UvrD subfamily. As to quaternary structure, heterotrimer of RecB, RecC and RecD. All subunits contribute to DNA-binding. Interacts with RecA. It depends on Mg(2+) as a cofactor.

It catalyses the reaction Exonucleolytic cleavage (in the presence of ATP) in either 5'- to 3'- or 3'- to 5'-direction to yield 5'-phosphooligonucleotides.. The catalysed reaction is Couples ATP hydrolysis with the unwinding of duplex DNA by translocating in the 3'-5' direction.. The enzyme catalyses ATP + H2O = ADP + phosphate + H(+). A helicase/nuclease that prepares dsDNA breaks (DSB) for recombinational DNA repair. Binds to DSBs and unwinds DNA via a highly rapid and processive ATP-dependent bidirectional helicase activity. Unwinds dsDNA until it encounters a Chi (crossover hotspot instigator) sequence from the 3' direction. Cuts ssDNA a few nucleotides 3' to the Chi site. The properties and activities of the enzyme are changed at Chi. The Chi-altered holoenzyme produces a long 3'-ssDNA overhang and facilitates RecA-binding to the ssDNA for homologous DNA recombination and repair. Holoenzyme degrades any linearized DNA that is unable to undergo homologous recombination. In the holoenzyme this subunit contributes ATPase, 3'-5' helicase, exonuclease activity and loads RecA onto ssDNA. The chain is RecBCD enzyme subunit RecB from Chlamydia muridarum (strain MoPn / Nigg).